Consider the following 1010-residue polypeptide: Polyhomeotic-like protein 1 (1010 aa).

The span at 1-22 (METESEQNSSSTNGSSSSGASS) shows a compositional bias: low complexity. Disordered regions lie at residues 1-25 (METE…SRPQ), 212-243 (NQQA…LSQT), 259-312 (GQSL…TGVV), 444-506 (QQQG…SKPP), 565-588 (GAVQ…PGAL), and 646-678 (KRKA…SPKV). Residues 212-228 (NQQASAQGPQMPGSTQK) show a composition bias toward polar residues. Residues 279 to 292 (MGPGGGGQAPGGLG) are compositionally biased toward gly residues. Residues 453–463 (PQPPQVPPTQQ) show a composition bias toward pro residues. Low complexity predominate over residues 464–480 (VPPSQSQQQAQTLVVQP). Positions 488–500 (TLPPEPTSKPPIP) are enriched in pro residues. Over residues 575 to 587 (ASSPPSSQAAPGA) the composition is skewed to low complexity. Position 651 is a phosphoserine (serine 651). Lysine 769 participates in a covalent cross-link: Glycyl lysine isopeptide (Lys-Gly) (interchain with G-Cter in SUMO2). The tract at residues 772–794 (QAGLPTGLNESQPSGPLGGDSPS) is disordered. The FCS-type zinc-finger motif lies at 797–831 (LEKKANLLKCEYCGKYAPAEQFRGSKRFCSMTCAK). Residues cysteine 806, cysteine 809, cysteine 825, and cysteine 829 each coordinate Zn(2+). Residues 854–928 (ASYARVRRRG…LGNTITTPST (75 aa)) are disordered. Residue serine 904 is modified to Phosphoserine. Threonine 928 is modified (phosphothreonine). Residues 946–1010 (WSVEEVYEFI…CAKINVLKET (65 aa)) form the SAM domain.

Homodimer. Component of a PRC1-like complex. Interacts with the SAM domain of SCMH1 via its SAM domain in vitro. Interacts with RNF2 and CBX7. Interacts with PHC2. Interacts with BMI1. As to expression, highly expressed in testis with lower levels in most other tissues. Expressed in embryonic stem cells.

Its subcellular location is the nucleus. In terms of biological role, component of a Polycomb group (PcG) multiprotein PRC1-like complex, a complex class required to maintain the transcriptionally repressive state of many genes, including Hox genes, throughout development. PcG PRC1 complex acts via chromatin remodeling and modification of histones; it mediates monoubiquitination of histone H2A 'Lys-119', rendering chromatin heritably changed in its expressibility. Required for proper control of cellular levels of GMNN expression. The protein is Polyhomeotic-like protein 1 of Mus musculus (Mouse).